A 1941-amino-acid polypeptide reads, in one-letter code: WD repeat-containing protein 81 (1941 aa).

A disordered region spans residues 1–27 (MAQGSGGREGALRTPAGGWHSPPSPDM). Residues 1–650 (MAQGSGGREG…TPCEASWTRD (650 aa)) are necessary and sufficient for the interaction with SQSTM1. Residues 337-614 (GQPTGQEELR…IPKLLVQTIQ (278 aa)) form the BEACH domain. 6 disordered regions span residues 618 to 637 (GRED…GRPV), 694 to 718 (VASA…EEGR), 1022 to 1074 (SKDL…VSFH), 1097 to 1217 (PQEA…EGKE), 1523 to 1556 (PSSR…DGHS), and 1569 to 1602 (QIPN…DNAL). Positions 1137–1146 (LRSGDSSQDL) are enriched in polar residues. Residues 1151–1174 (GSEEEEEEEDSCVVLEEEEGEQEE) show a composition bias toward acidic residues. A compositionally biased stretch (gly residues) spans 1586–1595 (SGVGGGGLGS). WD repeat units lie at residues 1639-1677 (IRLQ…LWPL), 1686-1724 (ETAP…VWDP), 1729-1769 (TLRT…FVDC), 1777-1815 (EFRL…LLDT), 1819-1856 (LVLR…VWKE), 1860-1896 (KPTH…VCSL), and 1902-1941 (QATT…RLLA).

This sequence belongs to the WD repeat WDR81 family. In terms of assembly, interacts with WDR91; involved in early to late endosome cargo transport. Interacts with BECN1; negatively regulates the PI3 kinase/PI3K activity associated with endosomal membranes. Interacts with SQSTM1; the interaction is direct and regulates the interaction of SQSTM1 with ubiquitinated proteins. Interacts with MAP1LC3C; recruits MAP1LC3C to ubiquitinated protein aggregates in the aggrephagy process. Widely expressed. In the brain, highest levels in cerebellum and corpus callosum.

It is found in the early endosome membrane. The protein resides in the late endosome membrane. It localises to the lysosome membrane. The protein localises to the cytoplasmic vesicle. Its subcellular location is the autophagosome membrane. It is found in the mitochondrion. The protein resides in the cytoplasm. It localises to the cytosol. Its function is as follows. Functions as a negative regulator of the PI3 kinase/PI3K activity associated with endosomal membranes via BECN1, a core subunit of the PI3K complex. By modifying the phosphatidylinositol 3-phosphate/PtdInsP3 content of endosomal membranes may regulate endosome fusion, recycling, sorting and early to late endosome transport. It is for instance, required for the delivery of cargos like BST2/tetherin from early to late endosome and thereby participates indirectly to their degradation by the lysosome. May also play a role in aggrephagy, the macroautophagic degradation of ubiquitinated protein aggregates. In this process, may regulate the interaction of SQSTM1 with ubiquitinated proteins and also recruit MAP1LC3C. May also be involved in maintenance of normal mitochondrial structure and organization. This chain is WD repeat-containing protein 81, found in Homo sapiens (Human).